Consider the following 315-residue polypeptide: Olfactory receptor 5AN6 (315 aa).

The Extracellular portion of the chain corresponds to 1-29 (MPGGRNSTVITKFILVGFSDFPKLKLVLF). The helical transmembrane segment at 30–50 (VIFLGSYLSTVVWNLGLIILI) threads the bilayer. Over 51–54 (RIDP) the chain is Cytoplasmic. A helical transmembrane segment spans residues 55 to 75 (YLHTPMYFFLSNLSFLDFCYI). The Extracellular segment spans residues 76–99 (SSTTPKMLSGFFQKSKSISFVGCT). An intrachain disulfide couples Cys-98 to Cys-180. Residues 100–120 (MQYFIFSSLGLSECCLLAAMA) traverse the membrane as a helical segment. The Cytoplasmic segment spans residues 121-123 (YDR). The helical transmembrane segment at 124-143 (YAAICNPLLYTAIMSPSLCV) threads the bilayer. His-144 is a topological domain (extracellular). Residues 145-165 (MVVGAYSTGLLGSLIQLCAIL) form a helical membrane-spanning segment. Topologically, residues 166-202 (QLHFCGPNIINHFFCDLPQLLVLSCSETFPLQVLKFV) are cytoplasmic. The helical transmembrane segment at 203–223 (IAVIFGVASVIVILISYGYII) threads the bilayer. At 224–240 (GTILNISSVEGRSKAFN) the chain is on the extracellular side. A helical transmembrane segment spans residues 241 to 261 (TCASHLTAVTLFFGSGLFVYM). Residues 262–272 (RPSSNSSQGYD) are Cytoplasmic-facing. Residues 273–293 (KMASVFYTVVIPMLNPLIYSL) traverse the membrane as a helical segment. The Extracellular portion of the chain corresponds to 294-315 (RNKEIKDALQRCKNKCFSQCHC).

It belongs to the G-protein coupled receptor 1 family. Localized in the dorsomedial and ventral region of the olfactory bulb.

The protein resides in the cell membrane. Its function is as follows. Odorant receptor specific for muscone. Muscone-binding causes a conformation change that triggers signaling via G(s)-class of G alpha protein GNAL, activating adenylyl cyclase. This chain is Olfactory receptor 5AN6, found in Mus musculus (Mouse).